We begin with the raw amino-acid sequence, 71 residues long: Defensin 1 (71 aa).

The N-terminal stretch at 1–25 (KTVAGFCIFFLVLFLAQEGVVKTEA) is a signal peptide. Cystine bridges form between Cys28/Cys71, Cys39/Cys60, and Cys45/Cys65.

Belongs to the DEFL family. In terms of assembly, may form dimers. In terms of processing, not glycosylated. Contains 4 disulfide bonds. Post-translationally, met-61 and Met-63 might be oxidized in some molecules.

Probably has antifungal activity. In Arachis hypogaea (Peanut), this protein is Defensin 1.